A 274-amino-acid polypeptide reads, in one-letter code: Kit ligand (274 aa).

Positions Met-1–Thr-25 are cleaved as a signal peptide. Topologically, residues Lys-26 to Gln-215 are extracellular. Disulfide bonds link Cys-29–Cys-114 and Cys-68–Cys-164. N-linked (GlcNAc...) asparagine glycosylation is found at Asn-90, Asn-97, Asn-145, Asn-196, and Asn-207. A helical membrane pass occupies residues Trp-216–Trp-238. The Cytoplasmic portion of the chain corresponds to Lys-239–Val-274.

The protein belongs to the SCF family. In terms of assembly, homodimer, non-covalently linked. In terms of processing, a soluble form is produced by proteolytic processing of the extracellular domain.

The protein resides in the cytoplasm. It is found in the cytoskeleton. It localises to the cell membrane. Its subcellular location is the cell projection. The protein localises to the lamellipodium. The protein resides in the filopodium. It is found in the secreted. Its function is as follows. Stimulates the proliferation of mast cells. Able to augment the proliferation of both myeloid and lymphoid hematopoietic progenitors in bone marrow culture. Also mediates cell-cell adhesion. Acts synergistically with other cytokines, probably interleukins. This chain is Kit ligand (KITLG), found in Equus caballus (Horse).